We begin with the raw amino-acid sequence, 366 residues long: Mitochondrial carrier protein MTM1 (366 aa).

Solcar repeat units follow at residues 14–149 (ERML…IRDV), 156–250 (YPTL…CKER), and 266–359 (VHFI…SKKV). 6 helical membrane-spanning segments follow: residues 17 to 36 (LSAG…MDVV), 126 to 146 (SLTL…YEYI), 162 to 182 (LFCG…LELV), 229 to 249 (TLWR…LCKE), 268 to 286 (FINS…AICT), and 331 to 352 (LYTG…MISS).

It belongs to the mitochondrial carrier (TC 2.A.29) family.

It localises to the mitochondrion inner membrane. In terms of biological role, involved in the mitochondrial activation of SOD2 by specifically facilitating insertion of the essential manganese cofactor. Has the ability to activate iron regulon in an iron-dependent manner. Responds to calorie restriction (CR) strength. This Saccharomyces cerevisiae (strain ATCC 204508 / S288c) (Baker's yeast) protein is Mitochondrial carrier protein MTM1 (MTM1).